A 307-amino-acid polypeptide reads, in one-letter code: Predicted GPI-anchored protein 44 (307 aa).

Positions 1-22 (MLSTNNLLILLIFSFLITNVKS) are cleaved as a signal peptide. Residues asparagine 146 and asparagine 217 are each glycosylated (N-linked (GlcNAc...) asparagine). Positions 232–261 (TPQPLLETPSQESSAPNIDSTTPTTIDNTV) are disordered. Polar residues predominate over residues 239–254 (TPSQESSAPNIDSTTP). Glycine 286 carries GPI-anchor amidated glycine lipidation. A propeptide spans 287–307 (GAMGYPSISVALGLVFIAYLV) (removed in mature form).

It is found in the cell membrane. The sequence is that of Predicted GPI-anchored protein 44 (PGA44) from Candida albicans (strain SC5314 / ATCC MYA-2876) (Yeast).